Reading from the N-terminus, the 502-residue chain is ATP synthase subunit beta, chloroplastic (502 aa).

Ser-17 carries the post-translational modification Phosphoserine. 176-183 (GGAGVGKT) contacts ATP.

The protein belongs to the ATPase alpha/beta chains family. As to quaternary structure, F-type ATPases have 2 components, CF(1) - the catalytic core - and CF(0) - the membrane proton channel. CF(1) has five subunits: alpha(3), beta(3), gamma(1), delta(1), epsilon(1). CF(0) has four main subunits: a(1), b(1), b'(1) and c(9-12).

The protein resides in the plastid. It localises to the chloroplast thylakoid membrane. It catalyses the reaction ATP + H2O + 4 H(+)(in) = ADP + phosphate + 5 H(+)(out). Produces ATP from ADP in the presence of a proton gradient across the membrane. The catalytic sites are hosted primarily by the beta subunits. This Lepidium virginicum (Virginia pepperweed) protein is ATP synthase subunit beta, chloroplastic.